A 210-amino-acid polypeptide reads, in one-letter code: Uridine kinase (210 aa).

12 to 19 (GGSGGGKT) serves as a coordination point for ATP.

The protein belongs to the uridine kinase family.

It is found in the cytoplasm. It catalyses the reaction uridine + ATP = UMP + ADP + H(+). The catalysed reaction is cytidine + ATP = CMP + ADP + H(+). The protein operates within pyrimidine metabolism; CTP biosynthesis via salvage pathway; CTP from cytidine: step 1/3. Its pathway is pyrimidine metabolism; UMP biosynthesis via salvage pathway; UMP from uridine: step 1/1. The sequence is that of Uridine kinase from Streptococcus gordonii (strain Challis / ATCC 35105 / BCRC 15272 / CH1 / DL1 / V288).